The sequence spans 207 residues: uncharacterized protein (207 aa).

Residues Ser-119 and His-160 each act as charge relay system in the active site.

The protein belongs to the peptidase S51 family.

This is an uncharacterized protein from Pasteurella multocida (strain Pm70).